The sequence spans 238 residues: 1-(5-phosphoribosyl)-5-[(5-phosphoribosylamino)methylideneamino] imidazole-4-carboxamide isomerase (238 aa).

Asp8 serves as the catalytic Proton acceptor. Catalysis depends on Asp129, which acts as the Proton donor.

The protein belongs to the HisA/HisF family.

The protein localises to the cytoplasm. The catalysed reaction is 1-(5-phospho-beta-D-ribosyl)-5-[(5-phospho-beta-D-ribosylamino)methylideneamino]imidazole-4-carboxamide = 5-[(5-phospho-1-deoxy-D-ribulos-1-ylimino)methylamino]-1-(5-phospho-beta-D-ribosyl)imidazole-4-carboxamide. The protein operates within amino-acid biosynthesis; L-histidine biosynthesis; L-histidine from 5-phospho-alpha-D-ribose 1-diphosphate: step 4/9. The polypeptide is 1-(5-phosphoribosyl)-5-[(5-phosphoribosylamino)methylideneamino] imidazole-4-carboxamide isomerase (Paracoccus denitrificans (strain Pd 1222)).